The following is a 286-amino-acid chain: ATP synthase gamma chain (286 aa).

Belongs to the ATPase gamma chain family. As to quaternary structure, F-type ATPases have 2 components, CF(1) - the catalytic core - and CF(0) - the membrane proton channel. CF(1) has five subunits: alpha(3), beta(3), gamma(1), delta(1), epsilon(1). CF(0) has three main subunits: a, b and c.

Its subcellular location is the cell inner membrane. Produces ATP from ADP in the presence of a proton gradient across the membrane. The gamma chain is believed to be important in regulating ATPase activity and the flow of protons through the CF(0) complex. This Shewanella halifaxensis (strain HAW-EB4) protein is ATP synthase gamma chain.